The chain runs to 255 residues: Capsid protein (255 aa).

The Bipartite nuclear localization signal motif lies at methionine 1 to serine 25.

Belongs to the geminiviridae capsid protein family. As to quaternary structure, homomultimer. Interacts with the movement protein. Binds to single-stranded and double-stranded viral DNA.

The protein resides in the virion. It is found in the host nucleus. Encapsidates the viral genome into characteristic twinned ('geminate') particles. Binds the genomic viral ssDNA and shuttles it into and out of the cell nucleus. Plays a role in protection of the genome from degradation, virus acquisition and transmission by insect vectors, infectivity, and systemic movement. The CP of monopartite geminiviruses is absolutely essential for virus movement. This Miscanthus streak virus (isolate 91) (MiSV) protein is Capsid protein.